A 543-amino-acid polypeptide reads, in one-letter code: Secreted effector protein SptP (543 aa).

Residues 35–139 (TDKAYVAPEK…FINLIKNKDN (105 aa)) form a chaperone-binding region. Positions 162 to 293 (DVGAESKQPL…TAELEKIKAG (132 aa)) constitute a Bacterial Rho-GAP domain. Positions 315–543 (IPINQQTQVK…QAQLLMTTAS (229 aa)) constitute a Tyrosine-protein phosphatase domain. Residue Cys-481 is the Phosphocysteine intermediate of the active site.

In terms of assembly, forms a complex with SicP.

It is found in the secreted. The protein resides in the host cytoplasm. It carries out the reaction O-phospho-L-tyrosyl-[protein] + H2O = L-tyrosyl-[protein] + phosphate. Effector proteins function to alter host cell physiology and promote bacterial survival in host tissues. This protein includes tyrosine phosphatase and GTPase activating protein (GAP) activities. After bacterial internalization, GAP mediates the reversal of the cytoskeletal changes induced by SopE. This function is independent of its tyrosine phosphatase activity, which remains unclear. The chain is Secreted effector protein SptP (sptP) from Salmonella typhi.